We begin with the raw amino-acid sequence, 100 residues long: Integration host factor subunit alpha (100 aa).

The disordered stretch occupies residues 53–72; the sequence is FDLRDKRQRPGRNPKTGEEI.

Belongs to the bacterial histone-like protein family. Heterodimer of an alpha and a beta chain.

Functionally, this protein is one of the two subunits of integration host factor, a specific DNA-binding protein that functions in genetic recombination as well as in transcriptional and translational control. This Pseudomonas entomophila (strain L48) protein is Integration host factor subunit alpha.